We begin with the raw amino-acid sequence, 198 residues long: NAD(P)H dehydrogenase (quinone) (198 aa).

In terms of domain architecture, Flavodoxin-like spans 4 to 189 (VLVLYYSMYG…SIARYQGEYV (186 aa)). FMN contacts are provided by residues 10–15 (SMYGHI) and 78–80 (TRF). Residue tyrosine 12 coordinates NAD(+). Tryptophan 98 lines the substrate pocket. Residues 113 to 118 (STGTGG) and histidine 133 each bind FMN.

Belongs to the WrbA family. It depends on FMN as a cofactor.

It carries out the reaction a quinone + NADH + H(+) = a quinol + NAD(+). It catalyses the reaction a quinone + NADPH + H(+) = a quinol + NADP(+). This is NAD(P)H dehydrogenase (quinone) from Escherichia coli (strain SE11).